The sequence spans 230 residues: MKITKNILKAEFIKRPNRFQAYVKINEKIEMVHVPNTGRCKEILIPGSMVILREENNENRKTRYDLIAGYKGDMLINIDSQIPNKVVHEALMNLKIDILKEYTNIKREKTFGKSRFDFKLEKENGEIYYLEVKGVTLENDGLTMFPDAPTERGTKHILELIDVKNKGMGAGVLFLIQLNGVKKFTPHHKMDKNFGEALRLAKEKGVDILAYDCLVEESSISLNNPISIEI.

It belongs to the SfsA family.

In Clostridium botulinum (strain ATCC 19397 / Type A), this protein is Sugar fermentation stimulation protein homolog.